Consider the following 56-residue polypeptide: Large ribosomal subunit protein bL33 (56 aa).

It belongs to the bacterial ribosomal protein bL33 family.

This is Large ribosomal subunit protein bL33 from Actinobacillus succinogenes (strain ATCC 55618 / DSM 22257 / CCUG 43843 / 130Z).